A 327-amino-acid chain; its full sequence is AASGLEAAMKAAGKQYFGTALTVRNDQGEIDIINNKNEIGSITPENAMKWEAIQPNRGQFNWGPADQHAAAATSRGYELRCHTLVWHSQLPSWVANGNWNNQTLQAVMRDHINAVMGRYRGKCTHWDVVNEALNEDGTYRDSVFLRVIGEAYIPIAFRMALAADPTTKLYYNDYNLEYGNAKTEGAKRIARLVKSYGLRIDGIGLQAHMTSESTPTQNTPTPSRAKLASVLQGLADLGVDVAYTELDIRMNTPATQQKLQTNADAYARIVGSCMDVKRCVGITVWGISDKYSWVPGTFPGEGSALLWNDNFQKKPSYTSTLNTINRR.

The GH10 domain occupies 1-323 (AASGLEAAMK…KPSYTSTLNT (323 aa)). Residues C81 and C123 are joined by a disulfide bond. N-linked (GlcNAc...) asparagine glycosylation is present at N101. The Proton donor role is filled by E131. E245 serves as the catalytic Nucleophile. C273 and C279 are joined by a disulfide.

Belongs to the glycosyl hydrolase 10 (cellulase F) family. As to quaternary structure, monomer.

The protein resides in the secreted. Its subcellular location is the extracellular space. The catalysed reaction is Endohydrolysis of (1-&gt;4)-beta-D-xylosidic linkages in xylans.. Its pathway is glycan degradation; xylan degradation. In terms of biological role, catalyzes the hydrolysis of the internal glycosidic bonds in heteroxylans, releasing mainly xylobiose and xylotriose. Most active on oat-spelt xylan. This Fusarium oxysporum f. sp. lycopersici (strain 4287 / CBS 123668 / FGSC 9935 / NRRL 34936) (Fusarium vascular wilt of tomato) protein is Endo-1,4-beta-xylanase A.